A 269-amino-acid polypeptide reads, in one-letter code: Formamidopyrimidine-DNA glycosylase (269 aa).

Pro-2 (schiff-base intermediate with DNA) is an active-site residue. Glu-3 (proton donor) is an active-site residue. Lys-57 acts as the Proton donor; for beta-elimination activity in catalysis. 3 residues coordinate DNA: His-90, Arg-109, and Lys-150. The FPG-type zinc finger occupies Gln-235–Lys-269. Arg-259 acts as the Proton donor; for delta-elimination activity in catalysis.

The protein belongs to the FPG family. As to quaternary structure, monomer. The cofactor is Zn(2+).

It carries out the reaction Hydrolysis of DNA containing ring-opened 7-methylguanine residues, releasing 2,6-diamino-4-hydroxy-5-(N-methyl)formamidopyrimidine.. The enzyme catalyses 2'-deoxyribonucleotide-(2'-deoxyribose 5'-phosphate)-2'-deoxyribonucleotide-DNA = a 3'-end 2'-deoxyribonucleotide-(2,3-dehydro-2,3-deoxyribose 5'-phosphate)-DNA + a 5'-end 5'-phospho-2'-deoxyribonucleoside-DNA + H(+). Its function is as follows. Involved in base excision repair of DNA damaged by oxidation or by mutagenic agents. Acts as a DNA glycosylase that recognizes and removes damaged bases. Has a preference for oxidized purines, such as 7,8-dihydro-8-oxoguanine (8-oxoG). Has AP (apurinic/apyrimidinic) lyase activity and introduces nicks in the DNA strand. Cleaves the DNA backbone by beta-delta elimination to generate a single-strand break at the site of the removed base with both 3'- and 5'-phosphates. This Salmonella dublin (strain CT_02021853) protein is Formamidopyrimidine-DNA glycosylase.